The sequence spans 277 residues: Inositol monophosphatase 1 (277 aa).

4 residues coordinate Mg(2+): Glu70, Asp90, Ile92, and Asp93. Substrate is bound by residues Glu70, 90-95, 194-196, Glu213, and Asp220; these read DPIDGT and GTA. Position 220 (Asp220) interacts with Mg(2+).

It belongs to the inositol monophosphatase superfamily. In terms of assembly, homodimer. Mg(2+) serves as cofactor. In terms of tissue distribution, mostly expressed in brain, small intestine, testis, kidney, and spleen (at protein level).

Its subcellular location is the cytoplasm. It carries out the reaction a myo-inositol phosphate + H2O = myo-inositol + phosphate. The catalysed reaction is 1D-myo-inositol 1-phosphate + H2O = myo-inositol + phosphate. The enzyme catalyses 1D-myo-inositol 2-phosphate + H2O = myo-inositol + phosphate. It catalyses the reaction 1D-myo-inositol 3-phosphate + H2O = myo-inositol + phosphate. It carries out the reaction 1D-myo-inositol 4-phosphate + H2O = myo-inositol + phosphate. The catalysed reaction is 1D-myo-inositol 5-phosphate + H2O = myo-inositol + phosphate. The enzyme catalyses 1D-myo-inositol 6-phosphate + H2O = myo-inositol + phosphate. It catalyses the reaction scyllo-inositol 1-phosphate + H2O = scyllo-inositol + phosphate. It carries out the reaction alpha-D-galactose 1-phosphate + H2O = D-galactose + phosphate. The catalysed reaction is alpha-D-glucose 1-phosphate + H2O = D-glucose + phosphate. The enzyme catalyses D-glucose 6-phosphate + H2O = D-glucose + phosphate. It catalyses the reaction beta-D-fructose 1-phosphate + H2O = D-fructose + phosphate. It carries out the reaction glycerol 2-phosphate + H2O = glycerol + phosphate. The catalysed reaction is adenosine 2'-phosphate + H2O = adenosine + phosphate. It functions in the pathway polyol metabolism; myo-inositol biosynthesis; myo-inositol from D-glucose 6-phosphate: step 2/2. Its activity is regulated as follows. Inhibited by Li(+), Ca(2+) and Mn(2+), but also by Mg(2+) at concentrations above 3 mM. Its function is as follows. Phosphatase involved in the dephosphorylation of myo-inositol monophosphate to generate myo-inositol. Is also able to dephosphorylate scyllo-inositol-phosphate, myo-inositol 1,4-diphosphate, scyllo-inositol-1,3-diphosphate and scyllo-inositol-1,4-diphosphate. Also dephosphorylates in vitro other sugar-phosphates including D-galactose-1-phosphate, glucose-1-phosphate, glucose-6-phosphate, fructose-1-phosphate, beta-glycerophosphate and 2'-AMP. Responsible for the provision of inositol required for synthesis of phosphatidylinositol and polyphosphoinositides, and involved in maintaining normal brain function. Has been implicated as the pharmacological target for lithium Li(+) action in brain. This Mus musculus (Mouse) protein is Inositol monophosphatase 1 (Impa1).